We begin with the raw amino-acid sequence, 84 residues long: MASARTLVLLLIGAVLMCQVSADSELLNEILAAHMEEDMPEKRCIDRYRSNICGSVIRPLDCTRRKSRMGRFARTNCKKLCGFC.

Positions 1 to 22 are cleaved as a signal peptide; it reads MASARTLVLLLIGAVLMCQVSA. The propeptide occupies 23–41; sequence DSELLNEILAAHMEEDMPE. In terms of domain architecture, ShKT spans 44-84; that stretch reads CIDRYRSNICGSVIRPLDCTRRKSRMGRFARTNCKKLCGFC. 3 disulfides stabilise this stretch: cysteine 44/cysteine 84, cysteine 53/cysteine 77, and cysteine 62/cysteine 81.

It belongs to the sea anemone 8 toxin family.

It is found in the secreted. The protein resides in the nematocyst. The chain is U-actitoxin-Avd8e from Anemonia viridis (Snakelocks anemone).